The following is a 266-amino-acid chain: Tryptophan synthase alpha chain (266 aa).

Active-site proton acceptor residues include glutamate 49 and aspartate 60.

Belongs to the TrpA family. Tetramer of two alpha and two beta chains.

The catalysed reaction is (1S,2R)-1-C-(indol-3-yl)glycerol 3-phosphate + L-serine = D-glyceraldehyde 3-phosphate + L-tryptophan + H2O. It participates in amino-acid biosynthesis; L-tryptophan biosynthesis; L-tryptophan from chorismate: step 5/5. In terms of biological role, the alpha subunit is responsible for the aldol cleavage of indoleglycerol phosphate to indole and glyceraldehyde 3-phosphate. The protein is Tryptophan synthase alpha chain of Shewanella amazonensis (strain ATCC BAA-1098 / SB2B).